The primary structure comprises 479 residues: Oxysterol-binding protein homolog C23B6.01c (479 aa).

S328, S408, S409, and S421 each carry phosphoserine. Residues 404 to 418 (KPEDSSIHKHSRDAS) are compositionally biased toward basic and acidic residues. Residues 404–479 (KPEDSSIHKH…KLHEEQDPAL (76 aa)) are disordered. The segment covering 439 to 452 (QSTASFVTYRSDNG) has biased composition (polar residues). Basic and acidic residues predominate over residues 470–479 (KLHEEQDPAL).

It belongs to the OSBP family.

Its subcellular location is the cytoplasm. It is found in the nucleus. This is Oxysterol-binding protein homolog C23B6.01c from Schizosaccharomyces pombe (strain 972 / ATCC 24843) (Fission yeast).